Consider the following 1057-residue polypeptide: uncharacterized protein (1057 aa).

Belongs to the IIV-6 261R/396L/443R family.

This is an uncharacterized protein from Acheta domesticus (House cricket).